The sequence spans 348 residues: Dihydroorotase (348 aa).

Zn(2+) is bound by residues histidine 13 and histidine 15. Substrate contacts are provided by residues 15 to 17 (HLR) and asparagine 41. Zn(2+) is bound by residues lysine 99, histidine 136, and histidine 174. Residue lysine 99 is modified to N6-carboxylysine. Position 136 (histidine 136) interacts with substrate. Leucine 219 is a substrate binding site. Position 247 (aspartate 247) interacts with Zn(2+). The active site involves aspartate 247. Positions 251 and 263 each coordinate substrate.

It belongs to the metallo-dependent hydrolases superfamily. DHOase family. Class II DHOase subfamily. As to quaternary structure, homodimer. Zn(2+) serves as cofactor.

The catalysed reaction is (S)-dihydroorotate + H2O = N-carbamoyl-L-aspartate + H(+). Its pathway is pyrimidine metabolism; UMP biosynthesis via de novo pathway; (S)-dihydroorotate from bicarbonate: step 3/3. In terms of biological role, catalyzes the reversible cyclization of carbamoyl aspartate to dihydroorotate. The chain is Dihydroorotase from Rhizobium etli (strain ATCC 51251 / DSM 11541 / JCM 21823 / NBRC 15573 / CFN 42).